The sequence spans 949 residues: Pyruvate, phosphate dikinase, chloroplastic (949 aa).

A chloroplast-targeting transit peptide spans 1–74; the sequence is MASAFKGILI…VMAPASDPTS (74 aa). At Thr-530 the chain carries Phosphothreonine; by PDRP1. Residue His-532 is the Tele-phosphohistidine intermediate of the active site. The substrate site is built by Arg-638, Arg-695, Glu-824, Gly-845, Thr-846, Asn-847, and Asp-848. Mg(2+) is bound at residue Glu-824. Residue Asp-848 participates in Mg(2+) binding. The active-site Proton donor is Cys-910.

It belongs to the PEP-utilizing enzyme family. In terms of assembly, homodimer. It depends on Mg(2+) as a cofactor. In terms of processing, phosphorylation of Thr-530 in the dark inactivates the enzyme. Dephosphorylation upon light stimulation reactivates the enzyme.

It localises to the plastid. Its subcellular location is the chloroplast. It carries out the reaction pyruvate + phosphate + ATP = phosphoenolpyruvate + AMP + diphosphate + H(+). Its activity is regulated as follows. Activated by light-induced dephosphorylation. Inhibited by dark-induced phosphorylation. Both reactions are catalyzed by PDRP1. Formation of phosphoenolpyruvate, which is the primary acceptor of CO(2) in C4 and some Crassulacean acid metabolism plants. The chain is Pyruvate, phosphate dikinase, chloroplastic (PPD) from Mesembryanthemum crystallinum (Common ice plant).